The sequence spans 353 residues: rRNA methyltransferase 1, mitochondrial (353 aa).

The transit peptide at 1–20 (MALLSTVRGATWGRLVTRHF) directs the protein to the mitochondrion. Positions 311–353 (PTEGERRQLLQDPQEPSARSEGLSMAQHPGLSSGPEKERQNEG) are disordered.

Belongs to the class IV-like SAM-binding methyltransferase superfamily. RNA methyltransferase TrmH family.

It is found in the mitochondrion matrix. The enzyme catalyses guanosine(1145) in 16S rRNA + S-adenosyl-L-methionine = 2'-O-methylguanosine(1145) in 16S rRNA + S-adenosyl-L-homocysteine + H(+). S-adenosyl-L-methionine-dependent 2'-O-ribose methyltransferase that catalyzes the formation of 2'-O-methylguanosine at position 1145 (Gm1145) in the 16S mitochondrial large subunit ribosomal RNA (mtLSU rRNA), a universally conserved modification in the peptidyl transferase domain of the mtLSU rRNA. This chain is rRNA methyltransferase 1, mitochondrial, found in Homo sapiens (Human).